Here is a 505-residue protein sequence, read N- to C-terminus: DEAD-box ATP-dependent RNA helicase 8 (505 aa).

Residues 1-85 (MNNRGRYPPG…GQIPGGNSNG (85 aa)) are disordered. Residues 20–31 (PNPNYQSRSGYQ) show a composition bias toward polar residues. Positions 43–71 (NYAQNHQQQFQQAPSQPHQYQQQQQQQQQ) are enriched in low complexity. The short motif at 131–159 (NEFEDYFLKRELLMGIYEKGFERPSPIQE) is the Q motif element. The Helicase ATP-binding domain maps to 162–332 (IPIALTGRDI…DRFLTNPYVI (171 aa)). 175–182 (AKNGTGKT) contacts ATP. Thr237 is subject to Phosphothreonine. A DEAD box motif is present at residues 280–283 (DEAD). Positions 342–502 (GITQFYAFVE…QIPPHIDQAI (161 aa)) constitute a Helicase C-terminal domain.

It belongs to the DEAD box helicase family. DDX6/DHH1 subfamily.

The protein resides in the cytoplasm. It localises to the P-body. The enzyme catalyses ATP + H2O = ADP + phosphate + H(+). Functionally, ATP-dependent RNA helicase involved in mRNA turnover, and more specifically in mRNA decapping. The sequence is that of DEAD-box ATP-dependent RNA helicase 8 (RH8) from Arabidopsis thaliana (Mouse-ear cress).